A 547-amino-acid polypeptide reads, in one-letter code: Chaperonin GroEL 1 (547 aa).

ATP is bound by residues 30–33 (TLGP), lysine 51, 87–91 (DGTTT), glycine 415, and aspartate 495.

Belongs to the chaperonin (HSP60) family. As to quaternary structure, forms a cylinder of 14 subunits composed of two heptameric rings stacked back-to-back. Interacts with the co-chaperonin GroES.

It is found in the cytoplasm. The catalysed reaction is ATP + H2O + a folded polypeptide = ADP + phosphate + an unfolded polypeptide.. Functionally, together with its co-chaperonin GroES, plays an essential role in assisting protein folding. The GroEL-GroES system forms a nano-cage that allows encapsulation of the non-native substrate proteins and provides a physical environment optimized to promote and accelerate protein folding. The chain is Chaperonin GroEL 1 from Rhizobium johnstonii (strain DSM 114642 / LMG 32736 / 3841) (Rhizobium leguminosarum bv. viciae).